Consider the following 427-residue polypeptide: Trigger factor (427 aa).

Residues 163 to 248 (GDTVVIDFVG…IHEVKAKEVP (86 aa)) form the PPIase FKBP-type domain.

The protein belongs to the FKBP-type PPIase family. Tig subfamily.

It localises to the cytoplasm. It carries out the reaction [protein]-peptidylproline (omega=180) = [protein]-peptidylproline (omega=0). In terms of biological role, involved in protein export. Acts as a chaperone by maintaining the newly synthesized protein in an open conformation. Functions as a peptidyl-prolyl cis-trans isomerase. The chain is Trigger factor from Streptococcus pneumoniae (strain CGSP14).